Consider the following 267-residue polypeptide: 7alpha-hydroxysteroid dehydrogenase (267 aa).

Residues 13 to 18, arginine 38, 63 to 64, and asparagine 90 contribute to the NADP(+) site; these read SATRGI and DA. Serine 145 and tyrosine 158 together coordinate cholate. Residues tyrosine 158, lysine 162, and 191–195 each bind NADP(+); that span reads IATDA. Tyrosine 158 acts as the Proton acceptor in catalysis.

Belongs to the short-chain dehydrogenases/reductases (SDR) family. Homotetramer.

It catalyses the reaction cholate + NADP(+) = 3alpha,12alpha-dihydroxy-7-oxo-5beta-cholanate + NADPH + H(+). The enzyme catalyses chenodeoxycholate + NADP(+) = 7-oxolithocholate + NADPH + H(+). Its function is as follows. 7alpha-hydroxysteroid dehydrogenase that catalyzes the NADP(+)-dependent oxidation of the 7alpha-hydroxy group of 7alpha-hydroxysteroids, such as the major human bile acids cholate and chenodeoxycholate, to the corresponding 7-oxosteroids. Is thus liley involved in the metabolism of primary bile acids. This is 7alpha-hydroxysteroid dehydrogenase from Paraclostridium sordellii (Clostridium sordellii).